We begin with the raw amino-acid sequence, 315 residues long: D-erythronate dehydrogenase (315 aa).

NAD(+)-binding residues include Ser119, Tyr143, and Lys147. The active-site Proton acceptor is Tyr143.

It belongs to the NAD(P)-dependent epimerase/dehydratase family.

It carries out the reaction D-erythronate + NAD(+) = 2-dehydro-D-erythronate + NADH + H(+). Its function is as follows. Catalyzes oxidation of D-erythronate to 2-oxo-tetronate. Can use either NAD(+) or NADP(+) as cosubstrate, with a preference for NAD(+). In Haemophilus influenzae (strain ATCC 51907 / DSM 11121 / KW20 / Rd), this protein is D-erythronate dehydrogenase.